A 1024-amino-acid chain; its full sequence is Integrator complex subunit 7 homolog (1024 aa).

2 stretches are compositionally biased toward polar residues: residues 1–11 and 19–36; these read MSKYKNSSLLN and PSLS…QLPP. 3 disordered regions span residues 1-109, 472-502, and 842-863; these read MSKY…PTNS, DNNN…NNNN, and NNNN…NNNN. Composition is skewed to low complexity over residues 44-77, 85-96, and 473-502; these read STNN…NNTV, TAGSSTSSASSV, and NNNN…NNNN.

This sequence belongs to the Integrator subunit 7 family. Component of the Integrator complex. The core complex associates with protein phosphatase 2A subunits, to form the Integrator-PP2A (INTAC) complex.

It is found in the nucleus. Its subcellular location is the chromosome. The protein resides in the cytoplasm. Functionally, component of the integrator complex, a multiprotein complex that terminates RNA polymerase II (Pol II) transcription in the promoter-proximal region of genes. The integrator complex provides a quality checkpoint during transcription elongation by driving premature transcription termination of transcripts that are unfavorably configured for transcriptional elongation: the complex terminates transcription by (1) catalyzing dephosphorylation of the C-terminal domain (CTD) of Pol II subunit polr2a, (2) degrading the exiting nascent RNA transcript via endonuclease activity and (3) promoting the release of Pol II from bound DNA. The integrator complex is also involved in terminating the synthesis of non-coding Pol II transcripts, such as enhancer RNAs (eRNAs), small nuclear RNAs (snRNAs), telomerase RNAs and long non-coding RNAs (lncRNAs). This is Integrator complex subunit 7 homolog (ints7) from Dictyostelium discoideum (Social amoeba).